Here is a 270-residue protein sequence, read N- to C-terminus: Formamidopyrimidine-DNA glycosylase (270 aa).

Pro-2 serves as the catalytic Schiff-base intermediate with DNA. The active-site Proton donor is the Glu-3. Catalysis depends on Lys-58, which acts as the Proton donor; for beta-elimination activity. Residues His-91, Arg-110, and Lys-151 each contribute to the DNA site. The FPG-type zinc-finger motif lies at 236-270; that stretch reads FVYGRGGQPCKVCGTTLREIKLGQRASVYCPKCQR. The active-site Proton donor; for delta-elimination activity is the Arg-260.

Belongs to the FPG family. As to quaternary structure, monomer. Zn(2+) is required as a cofactor.

It carries out the reaction Hydrolysis of DNA containing ring-opened 7-methylguanine residues, releasing 2,6-diamino-4-hydroxy-5-(N-methyl)formamidopyrimidine.. The catalysed reaction is 2'-deoxyribonucleotide-(2'-deoxyribose 5'-phosphate)-2'-deoxyribonucleotide-DNA = a 3'-end 2'-deoxyribonucleotide-(2,3-dehydro-2,3-deoxyribose 5'-phosphate)-DNA + a 5'-end 5'-phospho-2'-deoxyribonucleoside-DNA + H(+). In terms of biological role, involved in base excision repair of DNA damaged by oxidation or by mutagenic agents. Acts as a DNA glycosylase that recognizes and removes damaged bases. Has a preference for oxidized purines, such as 7,8-dihydro-8-oxoguanine (8-oxoG). Has AP (apurinic/apyrimidinic) lyase activity and introduces nicks in the DNA strand. Cleaves the DNA backbone by beta-delta elimination to generate a single-strand break at the site of the removed base with both 3'- and 5'-phosphates. This Pseudomonas savastanoi pv. phaseolicola (strain 1448A / Race 6) (Pseudomonas syringae pv. phaseolicola (strain 1448A / Race 6)) protein is Formamidopyrimidine-DNA glycosylase.